The sequence spans 889 residues: Inter-alpha-trypsin inhibitor heavy chain H3 (889 aa).

The N-terminal stretch at methionine 1–glycine 21 is a signal peptide. Positions phenylalanine 22–arginine 33 are excised as a propeptide. The VIT domain maps to leucine 29–glutamate 158. A glycan (N-linked (GlcNAc...) asparagine) is linked at asparagine 91. The VWFA domain occupies asparagine 284–valine 467. N-linked (GlcNAc...) asparagine glycosylation is present at asparagine 580. Aspartate 649 bears the Aspartate 1-(chondroitin 4-sulfate)-ester mark. A propeptide spanning residues proline 650 to phenylalanine 889 is cleaved from the precursor.

Belongs to the ITIH family. I-alpha-I plasma protease inhibitors are assembled from one or two heavy chains (HC) and one light chain, bikunin. Pre-alpha-inhibitor (P-alpha-I) is composed of ITIH3/HC3 and bikunin. In terms of processing, heavy chains are linked to bikunin via chondroitin 4-sulfate esterified to the alpha-carboxyl of the C-terminal aspartate after propeptide cleavage. As to expression, expressed in both liver and brain.

Its subcellular location is the secreted. In terms of biological role, may act as a carrier of hyaluronan in serum or as a binding protein between hyaluronan and other matrix protein, including those on cell surfaces in tissues to regulate the localization, synthesis and degradation of hyaluronan which are essential to cells undergoing biological processes. The sequence is that of Inter-alpha-trypsin inhibitor heavy chain H3 (Itih3) from Mus musculus (Mouse).